Here is a 190-residue protein sequence, read N- to C-terminus: Xanthine phosphoribosyltransferase (190 aa).

2 residues coordinate xanthine: leucine 20 and asparagine 27. Position 128 to 132 (128 to 132) interacts with 5-phospho-alpha-D-ribose 1-diphosphate; it reads ANGKA. Residue lysine 156 participates in xanthine binding.

Belongs to the purine/pyrimidine phosphoribosyltransferase family. Xpt subfamily. Homodimer.

Its subcellular location is the cytoplasm. It catalyses the reaction XMP + diphosphate = xanthine + 5-phospho-alpha-D-ribose 1-diphosphate. It functions in the pathway purine metabolism; XMP biosynthesis via salvage pathway; XMP from xanthine: step 1/1. In terms of biological role, converts the preformed base xanthine, a product of nucleic acid breakdown, to xanthosine 5'-monophosphate (XMP), so it can be reused for RNA or DNA synthesis. This chain is Xanthine phosphoribosyltransferase, found in Ruminiclostridium cellulolyticum (strain ATCC 35319 / DSM 5812 / JCM 6584 / H10) (Clostridium cellulolyticum).